Reading from the N-terminus, the 209-residue chain is Large ribosomal subunit protein uL3 (209 aa).

Gln150 is subject to N5-methylglutamine.

This sequence belongs to the universal ribosomal protein uL3 family. Part of the 50S ribosomal subunit. Forms a cluster with proteins L14 and L19. Methylated by PrmB.

In terms of biological role, one of the primary rRNA binding proteins, it binds directly near the 3'-end of the 23S rRNA, where it nucleates assembly of the 50S subunit. The sequence is that of Large ribosomal subunit protein uL3 from Salmonella paratyphi C (strain RKS4594).